A 134-amino-acid chain; its full sequence is Translation initiation factor 2 subunit beta (134 aa).

It belongs to the eIF-2-beta/eIF-5 family. As to quaternary structure, heterotrimer composed of an alpha, a beta and a gamma chain.

Functionally, eIF-2 functions in the early steps of protein synthesis by forming a ternary complex with GTP and initiator tRNA. The sequence is that of Translation initiation factor 2 subunit beta from Pyrobaculum calidifontis (strain DSM 21063 / JCM 11548 / VA1).